The primary structure comprises 262 residues: 27 kDa lipoprotein antigen (262 aa).

An N-terminal signal peptide occupies residues 1–28; that stretch reads MSASCAVPRLTRFAVFAVAGATALSLSA. Low complexity-rich tracts occupy residues 28-57 and 148-158; these read ACGS…PSST and STPGGASSTPP. Disordered regions lie at residues 28–60 and 138–171; these read ACGS…TPNA and VNGT…KPAW. Cysteine 29 carries N-palmitoyl cysteine lipidation. A lipid anchor (S-diacylglycerol cysteine) is attached at cysteine 29.

It localises to the cell membrane. In Mycobacterium intracellulare, this protein is 27 kDa lipoprotein antigen (Mi43).